We begin with the raw amino-acid sequence, 220 residues long: Vesicle-associated membrane protein 7 (220 aa).

Position 2 is an N-acetylalanine (Ala-2). The Cytoplasmic portion of the chain corresponds to 2-188; sequence AILFAVVARG…ARAMCMKNIK (187 aa). One can recognise a Longin domain in the interval 7-110; it reads VVARGTTILA…AMNSEFSSVL (104 aa). Positions 125–185 constitute a v-SNARE coiled-coil homology domain; the sequence is KVMETQAQVD…RNLARAMCMK (61 aa). A phosphoserine mark is found at Ser-167 and Ser-168. Residues 189 to 209 form a helical; Anchor for type IV membrane protein membrane-spanning segment; it reads LTIIIIIVSIVFIYIIVSLLC. Over 210–220 the chain is Vesicular; it reads GGFTWPNCVKK.

This sequence belongs to the synaptobrevin family. Component of the SNARE complex composed of STX4, SNAP23 and VAMP7 that binds SYT7 during lysosomal exocytosis. Component of the SNARE complex composed of STX7, STX8, VAMP7 and VTI1B that is required for heterotypic fusion of late endosomes with lysosomes. May interact with STX17. Interacts with PICALM. Interacts with RAB21.

The protein resides in the cytoplasmic vesicle. It is found in the secretory vesicle membrane. It localises to the golgi apparatus. The protein localises to the trans-Golgi network membrane. Its subcellular location is the late endosome membrane. The protein resides in the lysosome membrane. It is found in the endoplasmic reticulum membrane. It localises to the phagosome membrane. The protein localises to the synapse. Its subcellular location is the synaptosome. In terms of biological role, involved in the targeting and/or fusion of transport vesicles to their target membrane during transport of proteins from the early endosome to the lysosome. Required for heterotypic fusion of late endosomes with lysosomes and homotypic lysosomal fusion. Required for calcium regulated lysosomal exocytosis. Involved in the export of chylomicrons from the endoplasmic reticulum to the cis Golgi. Required for exocytosis of mediators during eosinophil and neutrophil degranulation, and target cell killing by natural killer cells. Required for focal exocytosis of late endocytic vesicles during phagosome formation. This chain is Vesicle-associated membrane protein 7 (Vamp7), found in Mus musculus (Mouse).